The sequence spans 220 residues: Large ribosomal subunit protein uL3 (220 aa).

The tract at residues 126-158 is disordered; it reads GFQGAIKRHGQSRGPMSHGSRYHRRPGSMGMAS.

It belongs to the universal ribosomal protein uL3 family. As to quaternary structure, part of the 50S ribosomal subunit. Forms a cluster with proteins L14 and L19.

One of the primary rRNA binding proteins, it binds directly near the 3'-end of the 23S rRNA, where it nucleates assembly of the 50S subunit. This Macrococcus caseolyticus (strain JCSC5402) (Macrococcoides caseolyticum) protein is Large ribosomal subunit protein uL3.